Reading from the N-terminus, the 490-residue chain is MEEADKRAEELRAQIAECEATLQSLKEQLAAAEAAKTPPYSDSTETDRGSSSSTWKWPLAEAEYERYGRQLILPSVGIQGQLRLKAASVLIVGAGGLGCPASAYFAGAGVGTIGLVDGDTVEASNLHRQVAHGTSRVGMLKVDSAISYLRELNPLVKYNAHQSHLTPENAESIVSGYDLVLDCTDHPTSRYLISDVCVLLRKPLVSASALRTDGQLIVLNTPAAPQADLSGGPCYRCVFPKPPPPDAVTSCGEGGILGPVVGVMGVLQALEGIRLLAAGRHLSPSPEQQQTAISPSLLLFSAPPDGSPAGFRSVRMRGRRKDCFACGEKSALSLATLREGGLDYVQFCGGSRKPVALLKSEERVSAEQLNALLQQQAGEHGKPVLLDVREREHFEIANIPGAINIPFSKTQNPGARHNAEDTPKLDWLPDGVADGHSPVYVVCRVGNDSQTVARQLKEFGLDNQGKRFIGDVKGGMLAWKREVDSTLPFM.

Residues Glu-33 to Thr-54 form a disordered region. Residues Gly-96, Asp-117, Ser-124–Arg-128, Lys-141, and Asp-185–His-186 contribute to the ATP site. Cys-234 and Cys-237 together coordinate Zn(2+). Cys-251 serves as the catalytic Glycyl thioester intermediate; for adenylyltransferase activity. Residues Cys-323 and Cys-326 each coordinate Zn(2+). One can recognise a Rhodanese domain in the interval Glu-379–Pro-488. Cys-443 acts as the Cysteine persulfide intermediate; for sulfurtransferase activity in catalysis.

In the N-terminal section; belongs to the HesA/MoeB/ThiF family. UBA4 subfamily. It depends on Zn(2+) as a cofactor.

It is found in the cytoplasm. The protein localises to the cytosol. It catalyses the reaction [molybdopterin-synthase sulfur-carrier protein]-C-terminal Gly-Gly + ATP + H(+) = [molybdopterin-synthase sulfur-carrier protein]-C-terminal Gly-Gly-AMP + diphosphate. The enzyme catalyses [molybdopterin-synthase sulfur-carrier protein]-C-terminal Gly-Gly-AMP + S-sulfanyl-L-cysteinyl-[cysteine desulfurase] + AH2 = [molybdopterin-synthase sulfur-carrier protein]-C-terminal-Gly-aminoethanethioate + L-cysteinyl-[cysteine desulfurase] + A + AMP + 2 H(+). It participates in tRNA modification; 5-methoxycarbonylmethyl-2-thiouridine-tRNA biosynthesis. In terms of biological role, plays a central role in 2-thiolation of mcm(5)S(2)U at tRNA wobble positions of cytosolic tRNA(Lys), tRNA(Glu) and tRNA(Gln). Also essential during biosynthesis of the molybdenum cofactor. Acts by mediating the C-terminal thiocarboxylation of sulfur carriers URM1 and MOCS2A. Its N-terminus first activates urm1 and MOCS2A as acyl-adenylates (-COAMP), then the persulfide sulfur on the catalytic cysteine is transferred to URM1 and MOCS2A to form thiocarboxylation (-COSH) of their C-terminus. The reaction probably involves hydrogen sulfide that is generated from the persulfide intermediate and that acts as a nucleophile towards URM1 and MOCS2A. Subsequently, a transient disulfide bond is formed. Does not use thiosulfate as sulfur donor; NFS1 probably acting as a sulfur donor for thiocarboxylation reactions. In Pyricularia oryzae (strain 70-15 / ATCC MYA-4617 / FGSC 8958) (Rice blast fungus), this protein is Adenylyltransferase and sulfurtransferase uba4.